We begin with the raw amino-acid sequence, 715 residues long: SANT and BTB domain regulator of class switch recombination (715 aa).

Residues 21–59 enclose the SANT domain; sequence DMILCSLVGVPQPISWDSVARLVPGYTPKECAKRFEELK. A BTB domain is found at 146-254; it reads MVIHVCDEAK…ECIRYCHKNM (109 aa). The span at 552–573 shows a compositional bias: acidic residues; sequence SEEEDYTTGSEVTEDEVGDEEE. Disordered stretches follow at residues 552 to 623 and 689 to 715; these read SEEE…VSLQ and SAHSNTRQMNTEKIPRPKPRFGTGRPT. Basic residues predominate over residues 578-605; it reads QAGRKVKPKRSAKQTKKHISSPSIHKKE. 2 stretches are compositionally biased toward polar residues: residues 614-623 and 690-699; these read DSSPFTVSLQ and AHSNTRQMNT.

Belongs to the KIAA1841 family. In terms of assembly, homodimer.

Negatively regulates class switch recombination or isotype switching in splenic B-cells. This chain is SANT and BTB domain regulator of class switch recombination, found in Xenopus laevis (African clawed frog).